Reading from the N-terminus, the 158-residue chain is Phosphopantetheine adenylyltransferase (158 aa).

Ser8 contacts substrate. Residues 8–9 (SF) and His16 each bind ATP. Substrate-binding residues include Lys40, Thr72, and Arg86. Residues 87 to 89 (GLR), Glu97, and 122 to 128 (HSFLSSS) each bind ATP.

It belongs to the bacterial CoaD family. In terms of assembly, homohexamer. The cofactor is Mg(2+).

The protein resides in the cytoplasm. The catalysed reaction is (R)-4'-phosphopantetheine + ATP + H(+) = 3'-dephospho-CoA + diphosphate. It functions in the pathway cofactor biosynthesis; coenzyme A biosynthesis; CoA from (R)-pantothenate: step 4/5. Functionally, reversibly transfers an adenylyl group from ATP to 4'-phosphopantetheine, yielding dephospho-CoA (dPCoA) and pyrophosphate. This is Phosphopantetheine adenylyltransferase from Prochlorococcus marinus (strain NATL1A).